We begin with the raw amino-acid sequence, 90 residues long: U-scoloptoxin(15)-Sa3a (90 aa).

The first 18 residues, 1–18 (MKMVYLGLFLIITSCVIS), serve as a signal peptide directing secretion.

The protein belongs to the scoloptoxin-15 family. In terms of processing, contains 3 disulfide bonds. Expressed by the venom gland.

The protein localises to the secreted. This Scolopendra alternans (Florida Keys giant centipede) protein is U-scoloptoxin(15)-Sa3a.